Here is a 600-residue protein sequence, read N- to C-terminus: MAALAALAKKVWSARRLLVLLLVPLALLPILFALPPKEGRCLYVILLMAVYWCTEALPLSVTALLPIILFPFMGILPSSKVCPQYFLDTNFLFLSGLIMASAIEEWNLHRRIALKVLMLVGVQPARLILGMMVTTSFLSMWLSNTASTAMMLPIASAILKSLFGQREARKDLPREGDESTAAVQGNGLRTVPTEMQFLASSEGGHTEDAEAPMELPDDSKEEEHRRNIWKGFLISIPYSASIGGTATLTGTAPNLILLGQLKSFFPQCDVVNFGSWFIFAFPLMLLFLLVGWLWISFLYGGMSWRSWRKKKSKIRADAEDQAKAVIQEEFQNLGPIKFAEQAVFILFCTFAILLFSRDPKFIPGWASLFAPGFVSDAVTGVAIVTILFFFPSQKPSLKWWFDFKAPNSETEPLLSWKKAQETVPWNIILLLGGGFAMAKGCEESGLSAWIGGQLHPLEHVPPLLAVLLITVVIAFFTEFASNTATIIIFLPVLAELAIRLHVHPLYLMIPGTVGCSYAFMLPVSTPPNSIAFSTGHLLVKDMVRTGLLMNLMGVLLLSLAMNTWAQTIFQLGTFPDWANTHAANATALPPALTNNTVQTF.

The Cytoplasmic segment spans residues 1 to 16; sequence MAALAALAKKVWSARR. A helical membrane pass occupies residues 17–37; that stretch reads LLVLLLVPLALLPILFALPPK. Residues 38 to 55 lie on the Extracellular side of the membrane; the sequence is EGRCLYVILLMAVYWCTE. The helical transmembrane segment at 56–76 threads the bilayer; the sequence is ALPLSVTALLPIILFPFMGIL. Over 77–82 the chain is Cytoplasmic; the sequence is PSSKVC. Residues 83–103 form a helical membrane-spanning segment; it reads PQYFLDTNFLFLSGLIMASAI. The Extracellular segment spans residues 104-137; the sequence is EEWNLHRRIALKVLMLVGVQPARLILGMMVTTSF. Residues 138–158 form a helical membrane-spanning segment; sequence LSMWLSNTASTAMMLPIASAI. The Cytoplasmic segment spans residues 159 to 229; sequence LKSLFGQREA…KEEEHRRNIW (71 aa). The helical transmembrane segment at 230-250 threads the bilayer; it reads KGFLISIPYSASIGGTATLTG. Residues 251-278 are Extracellular-facing; it reads TAPNLILLGQLKSFFPQCDVVNFGSWFI. Residues 279–299 form a helical membrane-spanning segment; the sequence is FAFPLMLLFLLVGWLWISFLY. Topologically, residues 300-336 are cytoplasmic; sequence GGMSWRSWRKKKSKIRADAEDQAKAVIQEEFQNLGPI. Residues 337–357 traverse the membrane as a helical segment; it reads KFAEQAVFILFCTFAILLFSR. Residues 358 to 372 are Extracellular-facing; it reads DPKFIPGWASLFAPG. The helical transmembrane segment at 373-393 threads the bilayer; it reads FVSDAVTGVAIVTILFFFPSQ. The Cytoplasmic segment spans residues 394–422; it reads KPSLKWWFDFKAPNSETEPLLSWKKAQET. An intramembrane region (helical) is located at residues 423–443; it reads VPWNIILLLGGGFAMAKGCEE. Residues 444–461 lie on the Cytoplasmic side of the membrane; sequence SGLSAWIGGQLHPLEHVP. A helical membrane pass occupies residues 462–482; sequence PLLAVLLITVVIAFFTEFASN. Residues 483–505 lie on the Extracellular side of the membrane; the sequence is TATIIIFLPVLAELAIRLHVHPL. A helical membrane pass occupies residues 506-526; that stretch reads YLMIPGTVGCSYAFMLPVSTP. Residues 527–546 are Cytoplasmic-facing; it reads PNSIAFSTGHLLVKDMVRTG. Residues 547–567 form a helical membrane-spanning segment; that stretch reads LLMNLMGVLLLSLAMNTWAQT. Residues 568 to 600 are Extracellular-facing; it reads IFQLGTFPDWANTHAANATALPPALTNNTVQTF. N-linked (GlcNAc...) asparagine glycans are attached at residues N584 and N594.

The protein belongs to the SLC13A/DASS transporter (TC 2.A.47) family. NADC subfamily. As to expression, highly expressed in kidney, and at much lower levels in brain.

It localises to the cell membrane. The catalysed reaction is succinate(out) + 3 Na(+)(out) = succinate(in) + 3 Na(+)(in). It carries out the reaction 2-oxoglutarate(out) + 3 Na(+)(out) = 2-oxoglutarate(in) + 3 Na(+)(in). The enzyme catalyses N-acetyl-L-aspartate(out) + 3 Na(+)(out) = N-acetyl-L-aspartate(in) + 3 Na(+)(in). It catalyses the reaction fumarate(out) + 3 Na(+)(out) = fumarate(in) + 3 Na(+)(in). The catalysed reaction is glutarate(out) + 3 Na(+)(out) = glutarate(in) + 3 Na(+)(in). It carries out the reaction 2,2-dimethylsuccinate(out) + 3 Na(+)(out) = 2,2-dimethylsuccinate(in) + 3 Na(+)(in). The enzyme catalyses 2,3-dimethylsuccinate(out) + 3 Na(+)(out) = 2,3-dimethylsuccinate(in) + 3 Na(+)(in). It catalyses the reaction malate(out) + 3 Na(+)(out) = malate(in) + 3 Na(+)(in). The catalysed reaction is itaconate(out) + 3 Na(+)(out) = itaconate(in) + 3 Na(+)(in). Functionally, high-affinity sodium-dicarboxylate cotransporter that accepts a range of substrates with 4-6 carbon atoms, such as the citric acid cycle intermediates succinate and alpha-ketoglutarate (2-oxoglutarate), as well as other compounds including N-acetyl-L-aspartate. Transports the dicarboxylate into the cell with a probable stoichiometry of 3 Na(+) for 1 divalent dicarboxylate, rendering the process electrogenic. Can transport citrate in a Na(+)-dependent manner, recognizing the divalent form of citrate rather than the trivalent form which is normally found in blood. Imports itaconate in hepatocytes leading to activation of TFEB-dependent lysosomal biogenesis involved in antibacterial innate immune response. This Mus musculus (Mouse) protein is Na(+)/dicarboxylate cotransporter 3 (Slc13a3).